The chain runs to 619 residues: Zinc finger protein 668 (619 aa).

Methionine 1 carries the N-acetylmethionine modification. Residue serine 10 is modified to Phosphoserine. Residues 22–44 (YKCLFCTKTFPNAPRAARHAATH) form a C2H2-type 1 zinc finger. A disordered region spans residues 36-74 (RAARHAATHTPTDCTEEVREAQPKVDTEPKAEEASGDKV). Residues 51–71 (EEVREAQPKVDTEPKAEEASG) are compositionally biased toward basic and acidic residues. Residues lysine 59, lysine 65, and lysine 80 each participate in a glycyl lysine isopeptide (Lys-Gly) (interchain with G-Cter in SUMO2) cross-link. C2H2-type zinc fingers lie at residues 84-106 (YACP…GRSH), 112-134 (FPCP…LASH), 140-162 (FRCT…QRGH), 168-190 (YACP…RRTH), 196-218 (YSCE…ERSH), 224-246 (FLCS…QRIH), 252-274 (YRCP…ERTH), 280-302 (FLCP…QRAH), 308-330 (YRCE…RRVH), 336-358 (FKCL…ALVH), and 364-386 (FRCE…SRMH). A Glycyl lysine isopeptide (Lys-Gly) (interchain with G-Cter in SUMO2) cross-link involves residue lysine 154. Serine 387 is subject to Phosphoserine. A C2H2-type 13 zinc finger spans residues 392-414 (FHCNACGKSFVVLSSLRKHERTH). Residues 491-513 (VGEAPSTLGDAGEVGGEETDEKP) form a disordered region. Residue lysine 512 forms a Glycyl lysine isopeptide (Lys-Gly) (interchain with G-Cter in SUMO2) linkage. 3 consecutive C2H2-type zinc fingers follow at residues 516 to 538 (FVCR…ERSH), 544 to 566 (FPCT…SRTH), and 572 to 594 (YSCS…ERTH).

Belongs to the krueppel C2H2-type zinc-finger protein family.

The protein localises to the nucleus. Functionally, may be involved in transcriptional regulation. May play a role in DNA repair process. In Mus musculus (Mouse), this protein is Zinc finger protein 668 (Znf668).